The sequence spans 169 residues: Probable phospholipid hydroperoxide glutathione peroxidase (169 aa).

Residue Cys43 is part of the active site.

Belongs to the glutathione peroxidase family. In terms of tissue distribution, germinating seed, apex, flower, as well as in stressed tissues.

It localises to the cytoplasm. It catalyses the reaction a hydroperoxy polyunsaturated fatty acid + 2 glutathione = a hydroxy polyunsaturated fatty acid + glutathione disulfide + H2O. Functionally, protects cells and enzymes from oxidative damage, by catalyzing the reduction of hydrogen peroxide, lipid peroxides and organic hydroperoxide, by glutathione. In Nicotiana sylvestris (Wood tobacco), this protein is Probable phospholipid hydroperoxide glutathione peroxidase.